Here is a 195-residue protein sequence, read N- to C-terminus: Thymidylate kinase (195 aa).

7 to 14 provides a ligand contact to ATP; that stretch reads GIDGVGKS.

Belongs to the thymidylate kinase family.

It catalyses the reaction dTMP + ATP = dTDP + ADP. Its function is as follows. Phosphorylation of dTMP to form dTDP in both de novo and salvage pathways of dTTP synthesis. The chain is Thymidylate kinase from Campylobacter hominis (strain ATCC BAA-381 / DSM 21671 / CCUG 45161 / LMG 19568 / NCTC 13146 / CH001A).